We begin with the raw amino-acid sequence, 91 residues long: Mercuric transport protein periplasmic component (91 aa).

The signal sequence occupies residues 1–19; that stretch reads MKKLFASLAIAAVVAPVWA. Residues 22 to 88 enclose the HMA domain; it reads QTVTLSVPGM…ATEDAGYPSS (67 aa). Residues cysteine 33 and cysteine 36 each contribute to the Hg(2+) site.

It belongs to the MerP family. Monomer.

Its subcellular location is the periplasm. Functionally, involved in mercury resistance. Acts as a mercury scavenger that specifically binds to a mercuric ion in the periplasm and probably passes it to the cytoplasmic mercuric reductase MerA via the mercuric transport protein MerT. This chain is Mercuric transport protein periplasmic component, found in Serratia marcescens.